A 281-amino-acid chain; its full sequence is Plasmanylethanolamine desaturase (281 aa).

The Cytoplasmic segment spans residues 1–28 (MKTQEIEKKVRQQDAQVLAQGYSPAIRA). Residues 29 to 45 (MEIAAIVSFVSLEVALV) traverse the membrane as a helical segment. Over 46–58 (YRLWGTPYAGTWL) the chain is Periplasmic. A helical membrane pass occupies residues 59-75 (LLSAVLLGYLAADFVSG). Residues 76 to 123 (FVHWMGDTWGSTEMPVLGKALIRPFREHHVDEKAITRHDFVETNGNNC) lie on the Cytoplasmic side of the membrane. Residues 124-138 (LISLPVAIIALCLPM) form a helical membrane-spanning segment. Residues 139-142 (SGPG) lie on the Periplasmic side of the membrane. A helical membrane pass occupies residues 143–159 (WVFCASFLGAMIFWVMA). Topologically, residues 160–281 (TNQFHKWSHM…VQEKPASTRP (122 aa)) are cytoplasmic. The Histidine box-1 signature appears at 164 to 168 (HKWSH). The Histidine box-2 motif lies at 191-195 (HRIHH).

It belongs to the fatty acid desaturase CarF family. As to quaternary structure, interacts with CarR.

It localises to the cell inner membrane. The catalysed reaction is a 1-(1,2-saturated alkyl)-2-acyl-sn-glycero-3-phosphoethanolamine + 2 Fe(II)-[cytochrome b5] + O2 + 2 H(+) = a 1-O-(1Z-alkenyl)-2-acyl-sn-glycero-3-phosphoethanolamine + 2 Fe(III)-[cytochrome b5] + 2 H2O. The enzyme catalyses 1-O-(13-methyltetradecyl)-2-(13-methyltetradecanoyl)-sn-glycero-3-phosphoethanolamine + 2 Fe(II)-[cytochrome b5] + O2 + 2 H(+) = 1-O-(1Z-13-methyltetradecenyl)-2-(13-methyltetradecanoyl)-sn-glycero-3-phosphoethanolamine + 2 Fe(III)-[cytochrome b5] + 2 H2O. Plasmanylethanolamine desaturase involved in plasmalogen biogenesis in the membrane, required for light-induced carotenogenesis. Plasmalogens are glycerophospholipids with a hydrocarbon chain linked by a vinyl ether bond at the glycerol sn-1 position, and are involved in antioxidative and signaling mechanisms, most precisely in sensing photooxidative stress through singlet oxygen. Participates in the light-dependent inactivation of the antisigma factor CarR. Mediates signaling by singlet oxygen, generated via photoexcited protoporphyrin IX. This is Plasmanylethanolamine desaturase from Myxococcus xanthus.